Here is a 565-residue protein sequence, read N- to C-terminus: Putative pentatricopeptide repeat-containing protein At3g05240 (565 aa).

PPR repeat units lie at residues 37-70 (NVIP…IDCP), 71-105 (SVYI…GYSP), 106-140 (DYFT…GFEV), 141-171 (NMYV…IPQW), 172-206 (NVVA…GVKA), 207-241 (NETI…GFDP), 250-280 (NVIL…MPER), 281-315 (TLVS…GIAP), 316-350 (DKVT…GFVK), 351-381 (DAAI…LEKK), 382-416 (DTIA…GNAT), 418-448 (DGIT…MRDL), and 454-484 (TVEH…MPVK). Residues 489–564 (IWGALLNGCD…VLGHSSVETM (76 aa)) are type E motif.

Belongs to the PPR family. PCMP-E subfamily.

The sequence is that of Putative pentatricopeptide repeat-containing protein At3g05240 (PCMP-E82) from Arabidopsis thaliana (Mouse-ear cress).